A 399-amino-acid polypeptide reads, in one-letter code: Elongation factor Tu (399 aa).

One can recognise a tr-type G domain in the interval 10–209 (KPHVNIGTIG…KVDEYIPTPV (200 aa)). The tract at residues 19–26 (GHVDHGKT) is G1. 19 to 26 (GHVDHGKT) is a binding site for GTP. A Mg(2+)-binding site is contributed by threonine 26. Positions 60–64 (GITIA) are G2. The G3 stretch occupies residues 81–84 (DCPG). GTP-binding positions include 81–85 (DCPGH) and 136–139 (NKAD). The tract at residues 136-139 (NKAD) is G4. A G5 region spans residues 174-176 (SAL).

Belongs to the TRAFAC class translation factor GTPase superfamily. Classic translation factor GTPase family. EF-Tu/EF-1A subfamily. As to quaternary structure, monomer.

It localises to the cytoplasm. The enzyme catalyses GTP + H2O = GDP + phosphate + H(+). In terms of biological role, GTP hydrolase that promotes the GTP-dependent binding of aminoacyl-tRNA to the A-site of ribosomes during protein biosynthesis. This is Elongation factor Tu from Campylobacter curvus (strain 525.92).